A 63-amino-acid polypeptide reads, in one-letter code: Beta-defensin 38 (63 aa).

A signal peptide spans 1 to 21 (MKISCFLLLILSLYFFQINQA). Intrachain disulfides connect cysteine 29–cysteine 58, cysteine 36–cysteine 51, and cysteine 41–cysteine 59.

The protein belongs to the beta-defensin family. Only expressed in epididymis (caput, corpus and cauda).

It is found in the secreted. Functionally, synthetic Defb38 kills both Gram-negative (E.coli and P.aeruginosa) and Gram-positive (E.faecium) bacteria. This Mus musculus (Mouse) protein is Beta-defensin 38 (Defb38).